Consider the following 91-residue polypeptide: Acyl carrier protein AsbD (91 aa).

In terms of domain architecture, Carrier spans Glu4–Gln82. An O-(pantetheine 4'-phosphoryl)serine modification is found at Ser40.

It belongs to the acyl carrier protein (ACP) family. In terms of processing, activated by the transfer of a 4'-phosphopantetheine group from CoA to Ser-40.

The protein operates within siderophore biosynthesis; petrobactin biosynthesis. Its function is as follows. Involved in the biosynthesis of petrobactin, a catecholate siderophore that functions in both iron acquisition and virulence. Aryl-carrier protein that activates 3,4-dihydroxybenzoate (3,4-DHBA) prior to its incorporation into petrobactin. The chain is Acyl carrier protein AsbD from Bacillus anthracis.